Here is a 383-residue protein sequence, read N- to C-terminus: L-aspartate/L-glutamate decarboxylase (383 aa).

Lys-232 bears the N6-(pyridoxal phosphate)lysine mark.

This sequence belongs to the group II decarboxylase family. MfnA subfamily. In terms of assembly, monomer. It depends on pyridoxal 5'-phosphate as a cofactor.

It catalyses the reaction L-aspartate + H(+) = beta-alanine + CO2. The catalysed reaction is L-glutamate + H(+) = 4-aminobutanoate + CO2. It carries out the reaction L-cysteate + H(+) = taurine + CO2. The enzyme catalyses 3-sulfino-L-alanine + H(+) = hypotaurine + CO2. Its pathway is cofactor biosynthesis; coenzyme A biosynthesis. In terms of biological role, catalyzes the decarboxylation of L-aspartate to produce beta-alanine, and the decarboxylation of L-glutamate to produce 4-aminobutanoate. Can also use cysteate and, to a lesser extent, cysteine sulfite (3-sulfino-L-alanine), but not L-tyrosine. Specific activities toward L-aspartate and cysteate are higher than toward L-glutamate. This is L-aspartate/L-glutamate decarboxylase from Pyrococcus horikoshii (strain ATCC 700860 / DSM 12428 / JCM 9974 / NBRC 100139 / OT-3).